An 88-amino-acid polypeptide reads, in one-letter code: Beta-insect excitatory toxin BmKIT1 (88 aa).

An N-terminal signal peptide occupies residues 1–18 (MKFFLIFLVIFPIMGVLG). In terms of domain architecture, LCN-type CS-alpha/beta spans 20–83 (KNGYAVDSSG…IKDATKSYCD (64 aa)). 4 disulfides stabilise this stretch: Cys34–Cys55, Cys40–Cys60, Cys44–Cys62, and Cys56–Cys82. At Ile87 the chain carries Isoleucine amide.

The protein belongs to the long (4 C-C) scorpion toxin superfamily. Sodium channel inhibitor family. Beta subfamily. Expressed by the venom gland.

It localises to the secreted. Functionally, excitatory insect beta-toxins induce a spastic paralysis. They bind voltage-independently at site-4 of sodium channels (Nav) and shift the voltage of activation toward more negative potentials thereby affecting sodium channel activation and promoting spontaneous and repetitive firing. This toxin is active only on insects. This Olivierus martensii (Manchurian scorpion) protein is Beta-insect excitatory toxin BmKIT1.